Reading from the N-terminus, the 255-residue chain is Small ribosomal subunit protein eS1 (255 aa).

Residue Ala2 is modified to N-acetylalanine; partial.

It belongs to the eukaryotic ribosomal protein eS1 family. Component of the small ribosomal subunit. Mature ribosomes consist of a small (40S) and a large (60S) subunit. The 40S subunit contains about 33 different proteins and 1 molecule of RNA (18S). The 60S subunit contains about 49 different proteins and 3 molecules of RNA (25S, 5.8S and 5S).

It localises to the cytoplasm. This Candida glabrata (strain ATCC 2001 / BCRC 20586 / JCM 3761 / NBRC 0622 / NRRL Y-65 / CBS 138) (Yeast) protein is Small ribosomal subunit protein eS1.